The chain runs to 329 residues: G-protein coupled bile acid receptor 1 (329 aa).

Residues 1 to 15 (MMTPNSTELSAIPMG) lie on the Extracellular side of the membrane. N-linked (GlcNAc...) asparagine glycosylation occurs at N5. Residues 16-36 (VLGLSLALASLIVIANLLLAL) traverse the membrane as a helical segment. Over 37 to 49 (GIALDRHLRSPPA) the chain is Cytoplasmic. Residues 50-70 (GCFFLSLLLAGLLTGLALPML) form a helical membrane-spanning segment. The Extracellular segment spans residues 71-84 (PGLWSRNHQGYWSC). C84 and C154 form a disulfide bridge. Residues 85-105 (LLLHLTPNFCFLSLLANLLLV) traverse the membrane as a helical segment. The Cytoplasmic portion of the chain corresponds to 106-124 (HGERYMAVLQPLRPHGSVR). Residues 125–145 (LALFLTWVSSLFFASLPALGW) traverse the membrane as a helical segment. Topologically, residues 146 to 164 (NHWSPDANCSSQAVFPAPY) are extracellular. A glycan (N-linked (GlcNAc...) asparagine) is linked at N153. Residues 165-185 (LYLEVYGLLLPAVGATALLSV) form a helical membrane-spanning segment. At 186-229 (RVLATAHRQLCEIRRLERAVCRDVPSTLARALTWRQARAQAGAT) the chain is on the cytoplasmic side. Residues 230-250 (LLFLLCWGPYVATLLLSVLAY) form a helical membrane-spanning segment. Residues 251-260 (ERRPPLGPGT) are Extracellular-facing. The helical transmembrane segment at 261 to 281 (LLSLISLGSTSAAAVPVAMGL) threads the bilayer. Topologically, residues 282-329 (GDQRYTAPWRTAAQRCLRVLRGRAKRDNPGPSTAYHTSSQCSIDLDLN) are cytoplasmic.

This sequence belongs to the G-protein coupled receptor 1 family.

It is found in the cell membrane. Its function is as follows. Receptor for bile acid. Bile acid-binding induces its internalization, activation of extracellular signal-regulated kinase and intracellular cAMP production. May be involved in the suppression of macrophage functions by bile acids. Involved in bile acid promoted GLP1R secretion. This Mus musculus (Mouse) protein is G-protein coupled bile acid receptor 1 (Gpbar1).